The sequence spans 142 residues: Hemoglobin subunit beta-C (142 aa).

Residues proline 2–histidine 142 form the Globin domain. Heme b-binding residues include histidine 59 and histidine 88.

The protein belongs to the globin family. In terms of assembly, heterotetramer of two alpha chains and two beta chains. Red blood cells.

Involved in oxygen transport from the lung to the various peripheral tissues. This is Hemoglobin subunit beta-C (HBBC) from Ovis aries (Sheep).